Consider the following 711-residue polypeptide: Polyribonucleotide nucleotidyltransferase (711 aa).

2 residues coordinate Mg(2+): D490 and D496. A KH domain is found at 556–615 (PRIETMQVPTDKIREVIGSGGKVIREIVEVSGAKVDINDDGVIKIASANGEAIQKAYDMI). The region spanning 625–693 (GAVYTGKVVK…DRGKVRLSMK (69 aa)) is the S1 motif domain.

Belongs to the polyribonucleotide nucleotidyltransferase family. Mg(2+) is required as a cofactor.

The protein resides in the cytoplasm. It carries out the reaction RNA(n+1) + phosphate = RNA(n) + a ribonucleoside 5'-diphosphate. Functionally, involved in mRNA degradation. Catalyzes the phosphorolysis of single-stranded polyribonucleotides processively in the 3'- to 5'-direction. This Ruegeria sp. (strain TM1040) (Silicibacter sp.) protein is Polyribonucleotide nucleotidyltransferase.